Consider the following 787-residue polypeptide: Disease resistance protein ADR1 (787 aa).

The region spanning 1 to 149 (MASFIDLFAG…LLTERNDSLS (149 aa)) is the RPW8 domain. A coiled-coil region spans residues 96–112 (HANKMKDLEKQISRFLN). Residue 193 to 200 (GMSGSGKT) participates in ATP binding. One can recognise an NB-ARC domain in the interval 247–414 (HQRKLVILDD…PLDLLTSVWV (168 aa)). 4 LRR repeats span residues 549–575 (MSRL…IFAN), 576–599 (LAKL…TIPL), 650–674 (ITSL…LSNV), and 722–745 (LGSL…VAAL).

It belongs to the disease resistance NB-LRR family.

Functionally, disease resistance (R) protein that mediates resistance against Hyaloperonospora parasitica in a salicylic acid-dependent manner. Also mediates resistance against Erysiphe cichoracearum is both salicylic acid-dependent and partially NPR1-dependent. Resistance proteins guard the plant against pathogens that contain an appropriate avirulence protein via an indirect interaction with this avirulence protein. That triggers a defense system including the hypersensitive response, which restricts the pathogen growth. In Arabidopsis thaliana (Mouse-ear cress), this protein is Disease resistance protein ADR1 (ADR1).